The sequence spans 104 residues: Small ribosomal subunit protein bS6c (104 aa).

The protein belongs to the bacterial ribosomal protein bS6 family.

It localises to the plastid. The protein resides in the cyanelle. Binds together with bS18 to 16S ribosomal RNA. The protein is Small ribosomal subunit protein bS6c (rps6) of Cyanophora paradoxa.